The sequence spans 467 residues: Methylenetetrahydrofolate--tRNA-(uracil-5-)-methyltransferase TrmFO (467 aa).

11 to 16 (GAGLAG) contributes to the FAD binding site.

It belongs to the MnmG family. TrmFO subfamily. FAD is required as a cofactor.

The protein localises to the cytoplasm. The enzyme catalyses uridine(54) in tRNA + (6R)-5,10-methylene-5,6,7,8-tetrahydrofolate + NADH + H(+) = 5-methyluridine(54) in tRNA + (6S)-5,6,7,8-tetrahydrofolate + NAD(+). It catalyses the reaction uridine(54) in tRNA + (6R)-5,10-methylene-5,6,7,8-tetrahydrofolate + NADPH + H(+) = 5-methyluridine(54) in tRNA + (6S)-5,6,7,8-tetrahydrofolate + NADP(+). In terms of biological role, catalyzes the folate-dependent formation of 5-methyl-uridine at position 54 (M-5-U54) in all tRNAs. The polypeptide is Methylenetetrahydrofolate--tRNA-(uracil-5-)-methyltransferase TrmFO (Prochlorococcus marinus (strain NATL1A)).